Here is a 121-residue protein sequence, read N- to C-terminus: UPF0102 protein Hhal_2103 (121 aa).

Residues 1-20 (MMAPQTTRNDPRQRGQEAEE) are disordered. Over residues 9–20 (NDPRQRGQEAEE) the composition is skewed to basic and acidic residues.

It belongs to the UPF0102 family.

This is UPF0102 protein Hhal_2103 from Halorhodospira halophila (strain DSM 244 / SL1) (Ectothiorhodospira halophila (strain DSM 244 / SL1)).